Reading from the N-terminus, the 1015-residue chain is Putative helicase mov-10-B.2 (1015 aa).

The disordered stretch occupies residues 94–130 (QWFRPRRRQQNQANATPGNVSSVTPSSDQGPSCPESG). Polar residues predominate over residues 109–123 (TPGNVSSVTPSSDQG). 555–562 (GPPGTGKT) is an ATP binding site. A DEAG box motif is present at residues 677-680 (DEAG).

It belongs to the DNA2/NAM7 helicase family. SDE3 subfamily.

Its subcellular location is the cytoplasm. It is found in the P-body. The enzyme catalyses ATP + H2O = ADP + phosphate + H(+). Its function is as follows. Probable RNA helicase. Required for RNA-mediated gene silencing by the RNA-induced silencing complex (RISC). Required for both miRNA-mediated translational repression and miRNA-mediated cleavage of complementary mRNAs by RISC. The protein is Putative helicase mov-10-B.2 (mov10b.2) of Danio rerio (Zebrafish).